The chain runs to 227 residues: Large ribosomal subunit protein bL25 (227 aa).

The protein belongs to the bacterial ribosomal protein bL25 family. CTC subfamily. In terms of assembly, part of the 50S ribosomal subunit; part of the 5S rRNA/L5/L18/L25 subcomplex. Contacts the 5S rRNA. Binds to the 5S rRNA independently of L5 and L18.

This is one of the proteins that binds to the 5S RNA in the ribosome where it forms part of the central protuberance. This Polaromonas sp. (strain JS666 / ATCC BAA-500) protein is Large ribosomal subunit protein bL25.